We begin with the raw amino-acid sequence, 839 residues long: Autophagy-related protein 9A (839 aa).

Position 2 is an N-acetylalanine (A2). Residues 2 to 61 (AQFDTEYQRLEASYSDSPPGEEDLLVHVAEGSKSPWHHIENLDLFFSRVYNLHQKNGFTC) are Cytoplasmic-facing. The short motif at 8-11 (YQRL) is the Tyrosine-based sorting signal element. Phosphoserine is present on residues S14, S16, and S18. The chain crosses the membrane as a helical span at residues 62–84 (MLIGEMFELMQFLFVVAFTTFLV). The Lumenal segment spans residues 85 to 128 (SCVDYDILFANKMVNHSLHPTEPVKVTLPDAFLPAQVCSARIQE). N99 carries an N-linked (GlcNAc...) asparagine glycan. The helical transmembrane segment at 129-154 (NGSLITILVIAGVFWIHRLIKFIYNI) threads the bilayer. Over 155-290 (CCYWEIHSFY…ELAQRLSNRI (136 aa)) the chain is Cytoplasmic. Residues 291 to 301 (LWIGIANFLLC) lie within the membrane without spanning it. Over 302–319 (PLILIWQILYAFFSYAEV) the chain is Cytoplasmic. An intramembrane segment occupies 320 to 328 (LKREPGALG). Topologically, residues 329 to 371 (ARCWSLYGRCYLRHFNELEHELQSRLNRGYKPASKYMNCFLSP) are cytoplasmic. Residues 372–397 (LLTLLAKNGAFFAGSILAVLIALTIY) form a helical membrane-spanning segment. Topologically, residues 398–406 (DEDVLAVEH) are lumenal. A helical transmembrane segment spans residues 407–424 (VLTTVTLLGVTVTVCRSF). The Cytoplasmic portion of the chain corresponds to 425-470 (IPDQHMVFCPEQLLRVILAHIHYMPDHWQGNAHRSQTRDEFAQLFQ). An intramembrane segment occupies 471–480 (YKAVFILEEL). The Cytoplasmic portion of the chain corresponds to 481–483 (LSP). Residues 484 to 492 (IVTPLILIF) lie within the membrane without spanning it. The Cytoplasmic segment spans residues 493–839 (CLRPRALEII…DELPPQVHKV (347 aa)). S656 carries the post-translational modification Phosphoserine. Disordered regions lie at residues 657–686 (PLQP…SSGS) and 717–839 (HKQQ…VHKV). Residues 724–736 (EPERHVWHRRESD) show a composition bias toward basic and acidic residues. A phosphoserine mark is found at S735, S738, S741, and S828. Composition is skewed to acidic residues over residues 737-747 (ESGESAPEEGG) and 823-832 (VPEEGSEDEL).

Belongs to the ATG9 family. Homotrimer; forms a homotrimer with a central pore that forms a path between the two membrane leaflets. Interacts (via cytoplasmic its C-terminus) with ATG2A. Interacts with SUPT20H. Interacts (via the tyrosine-based sorting signal motif) with AP4M1; promoting association with the AP-4 complex. Interacts with ARFIP1 and ARFIP2. Interacts with ATG4A; the interaction is direct and promotes ATG9A trafficking. In terms of processing, ufmylated in a DDRGK1 dependent manner.

It localises to the preautophagosomal structure membrane. The protein resides in the cytoplasmic vesicle. Its subcellular location is the autophagosome membrane. It is found in the golgi apparatus. The protein localises to the trans-Golgi network membrane. It localises to the late endosome membrane. The protein resides in the recycling endosome membrane. Its subcellular location is the endoplasmic reticulum membrane. It is found in the mitochondrion membrane. The enzyme catalyses a 1,2-diacyl-sn-glycero-3-phosphocholine(in) = a 1,2-diacyl-sn-glycero-3-phosphocholine(out). The catalysed reaction is a 1,2-diacyl-sn-glycero-3-phospho-L-serine(in) = a 1,2-diacyl-sn-glycero-3-phospho-L-serine(out). It carries out the reaction a 1,2-diacyl-sn-glycero-3-phosphoethanolamine(in) = a 1,2-diacyl-sn-glycero-3-phosphoethanolamine(out). Phospholipid scramblase involved in autophagy by mediating autophagosomal membrane expansion. Cycles between the preautophagosomal structure/phagophore assembly site (PAS) and the cytoplasmic vesicle pool and supplies membrane for the growing autophagosome. Lipid scramblase activity plays a key role in preautophagosomal structure/phagophore assembly by distributing the phospholipids that arrive through ATG2 (ATG2A or ATG2B) from the cytoplasmic to the luminal leaflet of the bilayer, thereby driving autophagosomal membrane expansion. Also required to supply phosphatidylinositol 4-phosphate to the autophagosome initiation site by recruiting the phosphatidylinositol 4-kinase beta (PI4KB) in a process dependent on ARFIP2, but not ARFIP1. In addition to autophagy, also plays a role in necrotic cell death. This Mus musculus (Mouse) protein is Autophagy-related protein 9A.